We begin with the raw amino-acid sequence, 249 residues long: NAD kinase (249 aa).

Asp49 acts as the Proton acceptor in catalysis. NAD(+) is bound by residues 49–50 (DG), Arg54, 115–116 (NE), Lys126, Arg143, Asp145, Ile153, 156–161 (TGYAFS), Ala180, and Gln211.

The protein belongs to the NAD kinase family. As to quaternary structure, homotetramer. Requires a divalent metal cation as cofactor.

The protein resides in the cytoplasm. It catalyses the reaction NAD(+) + ATP = ADP + NADP(+) + H(+). Involved in the regulation of the intracellular balance between NAD(H) and NADP(H), and is a key enzyme in the biosynthesis of NADP. Catalyzes specifically the phosphorylation on 2'-hydroxyl of the adenosine moiety of NAD to yield NADP. The polypeptide is NAD kinase (Archaeoglobus fulgidus (strain ATCC 49558 / DSM 4304 / JCM 9628 / NBRC 100126 / VC-16)).